A 131-amino-acid polypeptide reads, in one-letter code: MAKPAAAARPRRRERKNITSGVAHVNATFNNTMITITDAQGNTISWSSAGMQGFKGSRKSTPYAAQVAAEDAGRKASEHGMRTLEVEVKGPGAGRESALRALQAVGFQITSIRDVTPIPHNGCRPRKRRRV.

The protein belongs to the universal ribosomal protein uS11 family. Part of the 30S ribosomal subunit. Interacts with proteins S7 and S18. Binds to IF-3.

Located on the platform of the 30S subunit, it bridges several disparate RNA helices of the 16S rRNA. Forms part of the Shine-Dalgarno cleft in the 70S ribosome. This Paramagnetospirillum magneticum (strain ATCC 700264 / AMB-1) (Magnetospirillum magneticum) protein is Small ribosomal subunit protein uS11.